The chain runs to 208 residues: MKGLFVTIEGPEGSGKTTLIKSLLPYFEQKAQKVMATREPGGIAISEDIRTILHKQEYTMMEARTEALLYAAARRQHLVEKVMPALNEDYLVLCDRFIDSSLAYQGYARGLGMDKIFEINRFATEDCMPSLTIYLDIEPEVGLARIEKDAGREVNRLDMEDISFHKRVREGYLQVVERFSDRIVLVNADQPMEKLIEEVVQIIEDKLL.

Residue Gly10–Thr17 coordinates ATP.

Belongs to the thymidylate kinase family.

The enzyme catalyses dTMP + ATP = dTDP + ADP. Functionally, phosphorylation of dTMP to form dTDP in both de novo and salvage pathways of dTTP synthesis. This Bacillus cereus (strain ATCC 14579 / DSM 31 / CCUG 7414 / JCM 2152 / NBRC 15305 / NCIMB 9373 / NCTC 2599 / NRRL B-3711) protein is Thymidylate kinase.